Here is a 2408-residue protein sequence, read N- to C-terminus: Protein ELYS (2408 aa).

The segment at 1–492 (MQNLEAQVTG…SGLIHFACTG (492 aa)) is seven-bladed beta propeller repeats. Positions 1016-2408 (YSLPSLVWRE…AKPVTRRKMR (1393 aa)) are disordered. The span at 1124 to 1145 (PLTSSDTDNNQTPHKSPLLKTS) shows a compositional bias: polar residues. Over residues 1457 to 1466 (NDQDSEEIEE) the composition is skewed to acidic residues. 2 stretches are compositionally biased toward polar residues: residues 1705-1719 (INEG…QSTL) and 1735-1750 (PADS…TLPT). Positions 2136–2149 (QASKIQEDLSDTPR) are enriched in basic and acidic residues. 2 sufficient for chromatin-binding regions span residues 2281–2359 (STQY…PVEI) and 2359–2408 (IKLI…RKMR). The interval 2281-2408 (STQYVFSPPS…AKPVTRRKMR (128 aa)) is sufficient to block nuclear pore assembly. A DNA-binding region (a.T hook) is located at residues 2329–2341 (SKPRGRPPKHKAK). Residues 2331–2348 (PRGRPPKHKAKAVTRVLK) show a composition bias toward basic residues. Residues 2378–2389 (DSTEAKGAEKIS) are compositionally biased toward basic and acidic residues.

This sequence belongs to the ELYS family. In terms of assembly, interacts with the Nup107-160 subcomplex of the NPC.

The protein resides in the nucleus. The protein localises to the nuclear pore complex. It localises to the cytoplasm. Its subcellular location is the nucleoplasm. Functionally, required for the assembly of a functional nuclear pore complex (NPC) on the surface of chromosomes as nuclei form at the end of mitosis. May initiate NPC assembly by binding to chromatin and recruiting the Nup107-160 subcomplex, which may in turn recruit membrane vesicles containing pom121 and tmem48/ndc1. Association with chromatin may require the presence of the mcm2-mcm7 complex, suggesting a mechanism for coordination of nuclear assembly and the inactivation of replication licensing. In Xenopus laevis (African clawed frog), this protein is Protein ELYS (ahctf1).